We begin with the raw amino-acid sequence, 197 residues long: Rac-like GTP-binding protein ARAC1 (197 aa).

13–20 (GDGAVGKT) serves as a coordination point for GTP. The short motif at 35 to 43 (YVPTVFDNF) is the Effector region element. Residues 60–64 (DTAGQ) and 118–121 (TKLD) contribute to the GTP site. Cys194 is modified (cysteine methyl ester). Cys194 carries S-geranylgeranyl cysteine lipidation. Residues 195–197 (SIL) constitute a propeptide, removed in mature form.

The protein belongs to the small GTPase superfamily. Rho family. In terms of assembly, interacts with SPK1. Ubiquitous.

The protein localises to the cytoplasm. It is found in the membrane. Inactive GDP-bound Rho GTPases reside in the cytosol, are found in a complex with Rho GDP-dissociation inhibitors (Rho GDIs), and are released from the GDI protein in order to translocate to membranes upon activation. The sequence is that of Rac-like GTP-binding protein ARAC1 (ARAC1) from Arabidopsis thaliana (Mouse-ear cress).